Here is a 148-residue protein sequence, read N- to C-terminus: Auxin-responsive protein SAUR65 (148 aa).

Belongs to the ARG7 family.

It is found in the cell membrane. May promote auxin-stimulated organ elongation, such as hypocotyls, stamen filaments and petals. In Arabidopsis thaliana (Mouse-ear cress), this protein is Auxin-responsive protein SAUR65.